Here is a 345-residue protein sequence, read N- to C-terminus: NADH-quinone oxidoreductase subunit H (345 aa).

A run of 8 helical transmembrane segments spans residues 13-33, 84-104, 115-135, 161-181, 190-210, 248-268, 277-297, and 309-329; these read VLIL…LLFL, FMLA…VIPF, VAIL…IMGG, LGLI…GGIV, FFSW…ISCL, YIAI…GWLS, VFWM…VKAI, and LGWK…AFAA.

The protein belongs to the complex I subunit 1 family. In terms of assembly, NDH-1 is composed of 14 different subunits. Subunits NuoA, H, J, K, L, M, N constitute the membrane sector of the complex.

Its subcellular location is the cell inner membrane. The enzyme catalyses a quinone + NADH + 5 H(+)(in) = a quinol + NAD(+) + 4 H(+)(out). Functionally, NDH-1 shuttles electrons from NADH, via FMN and iron-sulfur (Fe-S) centers, to quinones in the respiratory chain. The immediate electron acceptor for the enzyme in this species is believed to be ubiquinone. Couples the redox reaction to proton translocation (for every two electrons transferred, four hydrogen ions are translocated across the cytoplasmic membrane), and thus conserves the redox energy in a proton gradient. This subunit may bind ubiquinone. The polypeptide is NADH-quinone oxidoreductase subunit H (Roseobacter denitrificans (strain ATCC 33942 / OCh 114) (Erythrobacter sp. (strain OCh 114))).